A 380-amino-acid polypeptide reads, in one-letter code: Erythronate-4-phosphate dehydrogenase (380 aa).

Substrate contacts are provided by S45 and T66. Residues D146, T174, 205–207, and D231 contribute to the NAD(+) site; that span reads ASR. R207 is a catalytic residue. E236 is an active-site residue. H253 acts as the Proton donor in catalysis. G256 is an NAD(+) binding site. Y257 contacts substrate.

It belongs to the D-isomer specific 2-hydroxyacid dehydrogenase family. PdxB subfamily. Homodimer.

The protein localises to the cytoplasm. The catalysed reaction is 4-phospho-D-erythronate + NAD(+) = (R)-3-hydroxy-2-oxo-4-phosphooxybutanoate + NADH + H(+). Its pathway is cofactor biosynthesis; pyridoxine 5'-phosphate biosynthesis; pyridoxine 5'-phosphate from D-erythrose 4-phosphate: step 2/5. In terms of biological role, catalyzes the oxidation of erythronate-4-phosphate to 3-hydroxy-2-oxo-4-phosphonooxybutanoate. This Pseudomonas putida (strain W619) protein is Erythronate-4-phosphate dehydrogenase.